The primary structure comprises 181 residues: Small ribosomal subunit protein bS16 (181 aa).

Residues 150–181 (KKAAEEAAKAAAEAPAEEAAPAEEAATEAAAE) are disordered. A compositionally biased stretch (low complexity) spans 158-181 (KAAAEAPAEEAAPAEEAATEAAAE).

This sequence belongs to the bacterial ribosomal protein bS16 family.

In Bacteroides fragilis (strain ATCC 25285 / DSM 2151 / CCUG 4856 / JCM 11019 / LMG 10263 / NCTC 9343 / Onslow / VPI 2553 / EN-2), this protein is Small ribosomal subunit protein bS16.